The following is a 261-amino-acid chain: HLA class II histocompatibility antigen, DM alpha chain (261 aa).

Positions 1-26 are cleaved as a signal peptide; it reads MGHEQNQGAALLQMLPLLWLLPHSWA. Residues 27–124 are alpha-1; the sequence is VPEAPTPMWP…KLDGKIPVSR (98 aa). Residues 27–233 lie on the Lumenal side of the membrane; sequence VPEAPTPMWP…PSDLLENVLC (207 aa). Residue N41 is glycosylated (N-linked (GlcNAc...) asparagine). 2 disulfides stabilise this stretch: C50-C105 and C147-C202. The 95-residue stretch at 121-215 folds into the Ig-like C1-type domain; sequence PVSRGFPIAE…HEIDRYTAIA (95 aa). Residues 125 to 217 form an alpha-2 region; that stretch reads GFPIAEVFTL…IDRYTAIAYW (93 aa). The connecting peptide stretch occupies residues 218-233; that stretch reads VPRNALPSDLLENVLC. The helical transmembrane segment at 234–254 threads the bilayer; it reads GVAFGLGVLGIIVGIVLIIYF. Residues 255–261 are Cytoplasmic-facing; that stretch reads RKPCSGD.

The protein belongs to the MHC class II family. Heterodimer of an alpha chain (DMA) and a beta chain (DMB). Interacts with MHCII; this interaction mediates rapid selection of high-affinity peptides in a pH-dependent manner, with an optimum at pH 5.5.

It localises to the late endosome membrane. Its subcellular location is the lysosome membrane. Its function is as follows. Plays a critical role in catalyzing the release of class II-associated invariant chain peptide (CLIP) from newly synthesized MHC class II molecules and freeing the peptide binding site for acquisition of antigenic peptides. In B-cells, the interaction between HLA-DM and MHC class II molecules is regulated by HLA-DO. This is HLA class II histocompatibility antigen, DM alpha chain (HLA-DMA) from Homo sapiens (Human).